Consider the following 256-residue polypeptide: Triosephosphate isomerase (256 aa).

Asparagine 10–lysine 12 contacts substrate. The active-site Electrophile is histidine 96. Catalysis depends on glutamate 168, which acts as the Proton acceptor. Positions 174 and 213 each coordinate substrate.

Belongs to the triosephosphate isomerase family. In terms of assembly, homodimer.

The protein localises to the cytoplasm. The catalysed reaction is D-glyceraldehyde 3-phosphate = dihydroxyacetone phosphate. Its pathway is carbohydrate biosynthesis; gluconeogenesis. It functions in the pathway carbohydrate degradation; glycolysis; D-glyceraldehyde 3-phosphate from glycerone phosphate: step 1/1. Its function is as follows. Involved in the gluconeogenesis. Catalyzes stereospecifically the conversion of dihydroxyacetone phosphate (DHAP) to D-glyceraldehyde-3-phosphate (G3P). In Wigglesworthia glossinidia brevipalpis, this protein is Triosephosphate isomerase.